A 246-amino-acid polypeptide reads, in one-letter code: Probable transcriptional regulatory protein CTC_02215 (246 aa).

This sequence belongs to the TACO1 family.

The protein localises to the cytoplasm. The chain is Probable transcriptional regulatory protein CTC_02215 from Clostridium tetani (strain Massachusetts / E88).